A 277-amino-acid chain; its full sequence is Transcription factor HES-4-B (277 aa).

The tract at residues 1-44 (MPADSMEKPTASPIAGAPANSAQTPDKPKSASEHRKSSKPIMEK) is disordered. The segment covering 26 to 35 (DKPKSASEHR) has biased composition (basic and acidic residues). The 58-residue stretch at 34–91 (HRKSSKPIMEKRRRARINESLGQLKTLILDALKKDSSRHSKLEKADILEMTVKHLRNL) folds into the bHLH domain. Positions 110–143 (YRAGFNECMNEVTRFLSTCEGVNTEVRTRLLGHL) constitute an Orange domain. A disordered region spans residues 258-277 (VSPLGGSTRADSAESVWRPW). The WRPW motif motif lies at 274 to 277 (WRPW).

As to quaternary structure, transcription repression requires formation of a complex with a corepressor protein of the Groucho/TLE family. Interacts with the bHLH protein hes6; this interaction may inhibit the transcriptional repressor activity. Binds DNA in the form of a heterodimer with the bHLH protein hey1/hrt1. Interacts (via Orange domain) with id3 (via HLH domain). As to expression, dynamically expressed in the borders of several tissue territories. Expressed in the pre-placodal ectoderm (PPE) from gastrula stage. During gastrulation, expressed in the deep layer of the dorsal lip, the Spemann organizer and three distinct regions in the prospective neuroectoderm: neural plate border, presumptive floor plate/notoplate and anterior neural plate. At later stages, expression is localized to the anterior of the prechordal plate, the presomitic mesoderm, neural tube, neural crest derivatives and several tissues of the central nervous system, with expression in the developing floor plate continues to at least the tadpole stage. From the early tailbud stage, expressed in the dorsoanterior region of the developing pronephros. During early tailbud stages, broadly expressed within the pronephric mesoderm. and in the sensorial layer of the ectoderm covering the pronephros anlagen. During late tailbud to early tadpole stages, expressed in the ventral region of the pronephros. Expression remains in the proximal and distal tubules at late tadpole stages (stage 35).

The protein localises to the nucleus. In terms of biological role, transcriptional repressor. Binds DNA on N-box motifs: 5'-CACNAG-3'. Promotes floor plate development and prechordal plate development. Required for lens development as early as the stage of lens field formation, partly through regulation of gene expression of the cell cycle inhibitor cdknx/p27(xic1). Required for formation of the neural crest downstream of multiple signaling pathways, and acts at the neural plate border via both DNA-binding dependent and independent mechanisms; acts in a DNA-binding dependent manner to repress pro-apoptotic and neural crest differentiation genes, including id3, delta1, and cdknx/p27(xic1), and thus promote the cell survival of neural plate border cells and maintain them in an undifferentiated state. Represses transcription of id3, at least in part through the repression of bmp4. On the other hand, acts in a DNA-independent manner separate from the transcriptional repressor function, to stimulate cell proliferation and promote neural crest formation. Via this DNA-independent route, acts in neurulae upstream of stat3 to transiently up-regulate the notch ligand dll1/delta1, which in turn up-regulates id3 expression. Then interacts directly with id3, which blocks the transcriptional repressor function of hes4-B/hairy2b to allow the progression of neural crest progenitors through specification and differentiation. Also acts via repressor-dependent and repressor-independent mechanisms in early gastrulae to establish the prospective anterior prechordal mesoderm identity in the Spemann organizer; induces specific genes independently from direct transcriptional regulation, and represses the genes specific for neighboring tissues through direct transcriptional repression. Modulates lateral inhibition during notch signaling and regulates the cell context dependent effects of notch (which can have inhibitory, permissive or enhancing roles in muscle or neural differentiation). Inhibits myogenesis. The chain is Transcription factor HES-4-B (hes4-b) from Xenopus laevis (African clawed frog).